We begin with the raw amino-acid sequence, 546 residues long: Chaperonin GroEL (546 aa).

Residues 30 to 33 (TLGP), K51, 87 to 91 (DGTTT), G415, 479 to 481 (NAA), and D495 each bind ATP.

The protein belongs to the chaperonin (HSP60) family. Forms a cylinder of 14 subunits composed of two heptameric rings stacked back-to-back. Interacts with the co-chaperonin GroES.

It is found in the cytoplasm. The enzyme catalyses ATP + H2O + a folded polypeptide = ADP + phosphate + an unfolded polypeptide.. Together with its co-chaperonin GroES, plays an essential role in assisting protein folding. The GroEL-GroES system forms a nano-cage that allows encapsulation of the non-native substrate proteins and provides a physical environment optimized to promote and accelerate protein folding. This Pseudomonas putida (strain W619) protein is Chaperonin GroEL.